The primary structure comprises 488 residues: Glutamyl-tRNA(Gln) amidotransferase subunit A (488 aa).

Residues Lys77 and Ser152 each act as charge relay system in the active site. Ser176 serves as the catalytic Acyl-ester intermediate.

The protein belongs to the amidase family. GatA subfamily. Heterotrimer of A, B and C subunits.

It catalyses the reaction L-glutamyl-tRNA(Gln) + L-glutamine + ATP + H2O = L-glutaminyl-tRNA(Gln) + L-glutamate + ADP + phosphate + H(+). Functionally, allows the formation of correctly charged Gln-tRNA(Gln) through the transamidation of misacylated Glu-tRNA(Gln) in organisms which lack glutaminyl-tRNA synthetase. The reaction takes place in the presence of glutamine and ATP through an activated gamma-phospho-Glu-tRNA(Gln). The polypeptide is Glutamyl-tRNA(Gln) amidotransferase subunit A (Streptococcus pyogenes serotype M3 (strain ATCC BAA-595 / MGAS315)).